A 128-amino-acid polypeptide reads, in one-letter code: Entry-fusion complex protein OPG094 (128 aa).

The Intravirion portion of the chain corresponds to 1 to 30 (MENVPNVYFNPVFIEPTFKHSLLSVYKHRL). The helical; Signal-anchor for type III membrane protein transmembrane segment at 31–51 (IVLFEVFVVFILIYVFFRSEL) threads the bilayer. Over 52–107 (NMFFMPKRKIPDPIDRLRRANLACEDDKLMIYGLPWMTTQTSALSINSKPIVYKDC) the chain is Virion surface. Cys-75 and Cys-107 form a disulfide bridge.

It belongs to the orthopoxvirus OPG099 family. As to quaternary structure, interacts with OPG086. Component of the entry fusion complex (EFC) composed of OPG053, OPG076, OPG086, OPG094, OPG095, OPG099, OPG107, OPG143, OPG104J5, OPG147 and OPG155. Except for OPG095 and OPG053, each of the EFC proteins is required for assembly or stability of the complex. Most cysteines are linked by disulfide bonds. They are created by the viral disulfide bond formation pathway, a poxvirus-specific redox pathway that operates on the cytoplasmic side of the MV membranes. Post-translationally, unglycosylated because produced in viral factories instead of the classic ER -Golgi route.

The protein resides in the virion membrane. Its function is as follows. Component of the entry fusion complex (EFC), which consists of 11 proteins. During cell infection, this complex mediates entry of the virion core into the host cytoplasm by a two-step mechanism consisting of lipid mixing of the viral and cellular membranes and subsequent pore formation. This Vaccinia virus (strain Copenhagen) (VACV) protein is Entry-fusion complex protein OPG094 (OPG099).